Consider the following 631-residue polypeptide: Nucleoside triphosphatase I (631 aa).

The Helicase ATP-binding domain occupies 42 to 204; the sequence is FLGLDSMHSL…TMLVNLLRPG (163 aa). 55–62 serves as a coordination point for ATP; the sequence is HETGVGKT. A DEXH box motif is present at residues 141-144; the sequence is DECH. One can recognise a Helicase C-terminal domain in the interval 367-532; that stretch reads KFIDVCLGIL…EFVQLFRVFK (166 aa). The tract at residues 457–524 is binding to the cap-specific mRNA (nucleoside-2'-O-)-methyltransferase; the sequence is DIFILDMTWN…EIIQSKSKEF (68 aa).

Belongs to the helicase family. NPH I subfamily. In terms of assembly, monomer. Interacts (via C-terminus) with RAP94/OPG109 (via N-terminus). Interacts with the cap-specific mRNA (nucleoside-2'-O-)-methyltransferase OPG102.

It is found in the virion. The enzyme catalyses a ribonucleoside 5'-triphosphate + H2O = a ribonucleoside 5'-diphosphate + phosphate + H(+). In terms of biological role, DNA-dependent ATPase that acts as a 5' to 3' translocase on single-stranded DNA and thereby plays a role in transcription termination of viral early genes. Uses forward translocation in concert with the viral RNA polymerase RAP94/OPG109 subunit and the capping enzyme/VTF to catalyze release of UUUUUNU-containing nascent RNA from the elongation complex. In addition, acts as a positive elongation factor to assist transcription through problematic sequences. In Bos taurus (Bovine), this protein is Nucleoside triphosphatase I (OPG123).